We begin with the raw amino-acid sequence, 402 residues long: 2,3-bisphosphoglycerate-independent phosphoglycerate mutase 2 (402 aa).

It belongs to the BPG-independent phosphoglycerate mutase family. A-PGAM subfamily.

It catalyses the reaction (2R)-2-phosphoglycerate = (2R)-3-phosphoglycerate. Its pathway is carbohydrate degradation; glycolysis; pyruvate from D-glyceraldehyde 3-phosphate: step 3/5. Functionally, catalyzes the interconversion of 2-phosphoglycerate and 3-phosphoglycerate. The chain is 2,3-bisphosphoglycerate-independent phosphoglycerate mutase 2 (apgM2) from Methanothermobacter thermautotrophicus (strain ATCC 29096 / DSM 1053 / JCM 10044 / NBRC 100330 / Delta H) (Methanobacterium thermoautotrophicum).